We begin with the raw amino-acid sequence, 351 residues long: Dihydroorotate dehydrogenase (quinone) (351 aa).

Residues 61–65 (AGLDK) and Thr85 contribute to the FMN site. Residue Lys65 participates in substrate binding. 110–114 (NRMGF) is a binding site for substrate. FMN contacts are provided by Asn139 and Asn172. Asn172 is a substrate binding site. Residue Ser175 is the Nucleophile of the active site. Asn177 is a binding site for substrate. Residues Lys217 and Thr245 each coordinate FMN. 246 to 247 (NT) is a binding site for substrate. Residues Gly268, Gly297, and 318-319 (YS) each bind FMN.

The protein belongs to the dihydroorotate dehydrogenase family. Type 2 subfamily. Monomer. It depends on FMN as a cofactor.

Its subcellular location is the cell membrane. It catalyses the reaction (S)-dihydroorotate + a quinone = orotate + a quinol. The protein operates within pyrimidine metabolism; UMP biosynthesis via de novo pathway; orotate from (S)-dihydroorotate (quinone route): step 1/1. Functionally, catalyzes the conversion of dihydroorotate to orotate with quinone as electron acceptor. This chain is Dihydroorotate dehydrogenase (quinone), found in Stenotrophomonas maltophilia (strain K279a).